We begin with the raw amino-acid sequence, 375 residues long: Outer membrane porin OmpD (375 aa).

An N-terminal signal peptide occupies residues 1-34 (MRKHAKKIIRIIKMKLKLVAVAVTSLLAAGVVNA).

The protein belongs to the Gram-negative porin family. Homotrimer. Mixed heterotrimers with other porins are also probable.

The protein localises to the cell outer membrane. In terms of biological role, forms pores that allow passive diffusion of small molecules across the outer membrane. This is Outer membrane porin OmpD from Salmonella typhimurium (strain SL1344).